Consider the following 234-residue polypeptide: Thrombin-like enzyme contortrixobin (234 aa).

Residues 1-225 (VVGGDECNIN…YNDWIQSIIA (225 aa)) form the Peptidase S1 domain. 6 disulfide bridges follow: Cys7–Cys139, Cys26–Cys42, Cys74–Cys232, Cys118–Cys186, Cys150–Cys165, and Cys176–Cys201. Active-site charge relay system residues include His41 and Asp86. The active-site Charge relay system is Ser180.

Monomer. Post-translationally, not glycosylated. In terms of tissue distribution, expressed by the venom gland.

It localises to the secreted. With respect to regulation, strongly inhibited by diisopropylfluorophosphate (DFP) and to a lesser extent by PMSF, benzamidine and 4,6-diamidino-2-phenylindole. Low inhibition by hirudin. In terms of biological role, thrombin-like snake venom serine protease that cleaves beta chain of fibrinogen (FGB), releasing fibrinopeptide B. Has a coagulant activity activating blood coagulation factors V (F5) and XIII (F13A1). This is Thrombin-like enzyme contortrixobin from Agkistrodon contortrix contortrix (Southern copperhead).